The following is a 636-amino-acid chain: Carbon monoxide dehydrogenase 2 (636 aa).

[4Fe-4S] cluster-binding residues include Cys39, Cys47, Cys48, Cys51, Cys56, and Cys70. [Ni-4Fe-5S] cluster contacts are provided by His261, Cys295, Cys333, Cys446, Cys476, and Cys526.

Belongs to the Ni-containing carbon monoxide dehydrogenase family. As to quaternary structure, homodimer. Requires [4Fe-4S] cluster as cofactor. [Ni-4Fe-5S] cluster serves as cofactor.

The protein resides in the cytoplasm. It is found in the cell membrane. The catalysed reaction is CO + 2 oxidized [2Fe-2S]-[ferredoxin] + H2O = 2 reduced [2Fe-2S]-[ferredoxin] + CO2 + 2 H(+). Its activity is regulated as follows. Inactivated by O(2). CODH oxidizes carbon monoxide coupled, via CooF, to the reduction of a hydrogen cation by a hydrogenase (possibly CooH). The protein is Carbon monoxide dehydrogenase 2 (cooS2) of Carboxydothermus hydrogenoformans (strain ATCC BAA-161 / DSM 6008 / Z-2901).